The sequence spans 241 residues: Anthocyanidin 3-O-glucosyltransferase 4 (241 aa).

UDP-alpha-D-glucose-binding residues include Gln-104, His-119, Trp-122, Asn-123, Ser-124, and Glu-127. Ala-142 provides a ligand contact to an anthocyanidin. Positions 143 and 144 each coordinate UDP-alpha-D-glucose.

It belongs to the UDP-glycosyltransferase family. In terms of tissue distribution, faintly expressed in cotyledons, roots and leaves.

It catalyses the reaction an anthocyanidin + UDP-alpha-D-glucose + H(+) = an anthocyanidin 3-O-beta-D-glucoside + UDP. It participates in pigment biosynthesis; anthocyanin biosynthesis. Functionally, in the presence of other necessary color factors, this glycosylation reaction allows the accumulation of anthocyanin pigments. The sequence is that of Anthocyanidin 3-O-glucosyltransferase 4 (GT4) from Manihot esculenta (Cassava).